The chain runs to 245 residues: Complement C1q subcomponent subunit A (245 aa).

An N-terminal signal peptide occupies residues 1–22 (METSQGWLVACVLTMTLVWTVA). Positions 28-114 (APNGKDGAPG…NPGNIRDQPR (87 aa)) are disordered. One can recognise a Collagen-like domain in the interval 31–109 (GKDGAPGNPG…KGVKGNPGNI (79 aa)). Residues proline 39 and proline 45 each carry the 4-hydroxyproline modification. At lysine 48 the chain carries 5-hydroxylysine. A glycan (O-linked (Gal...) hydroxylysine; alternate) is linked at lysine 48. Residue proline 54 is modified to 4-hydroxyproline. Lysine 67 bears the 5-hydroxylysine mark. Lysine 67 is a glycosylation site (O-linked (Gal...) hydroxylysine; alternate). Residues proline 79 and proline 85 each carry the 4-hydroxyproline modification. Low complexity predominate over residues 79–99 (PGNVGLPGPSGPLGDSGPQGL). Lysine 100 carries the 5-hydroxylysine modification. Lysine 100 is a glycosylation site (O-linked (Gal...) hydroxylysine; alternate). One can recognise a C1q domain in the interval 110–245 (RDQPRPAFSA…FSGFLIFPSA (136 aa)). Asparagine 146 carries an N-linked (GlcNAc...) asparagine glycan. Glutamine 199 serves as a coordination point for Ca(2+).

As to quaternary structure, core component of the complement C1 complex, a calcium-dependent complex composed of 1 molecule of the C1Q subcomplex, 2 molecules of C1R and 2 molecules of C1S. The C1Q subcomplex is composed 18 subunits: 3 chains of C1QA, C1QB, and C1QC trimerize to form 6 collagen-like triple helices connected to six globular ligand-recognition modules (C1q domain). Interacts with CR1 (via Sushi 24 and Sushi 25 domains). Interacts (via C-terminus) with CD33; this interaction activates CD33 inhibitory motifs. In terms of processing, O-linked glycans are assumed to be the Glc-Gal disaccharides typically found as secondary modifications of hydroxylated lysines in collagen-like domains.

The protein localises to the secreted. It localises to the cell surface. The C1Q subcomplex is inhibited by sulfated molecules, such as triterpenoid sulfates, heparan sulfate, or chondroitin sulfates. Core component of the complement C1 complex, a multiprotein complex that initiates the classical pathway of the complement system, a cascade of proteins that leads to phagocytosis and breakdown of pathogens and signaling that strengthens the adaptive immune system. The classical complement pathway is initiated by the C1Q subcomplex of the C1 complex, which specifically binds IgG or IgM immunoglobulins complexed with antigens, forming antigen-antibody complexes on the surface of pathogens: C1QA, together with C1QB and C1QC, specifically recognizes and binds the Fc regions of IgG or IgM via its C1q domain. Immunoglobulin-binding activates the proenzyme C1R, which cleaves C1S, initiating the proteolytic cascade of the complement system. The C1Q subcomplex is activated by a hexamer of IgG complexed with antigens, while it is activated by a pentameric IgM. The C1Q subcomplex also recognizes and binds phosphatidylserine exposed on the surface of cells undergoing programmed cell death, possibly promoting activation of the complement system. The chain is Complement C1q subcomponent subunit A from Mus musculus (Mouse).